Here is a 175-residue protein sequence, read N- to C-terminus: uncharacterized protein (175 aa).

Polar residues predominate over residues 1–14 (MNTSSRIQLPSSND). 2 disordered regions span residues 1-31 (MNTS…SKRS) and 127-175 (ARSR…QSKR). Positions 16–27 (HVYDGRSNEPKA) are enriched in basic and acidic residues. Positions 130–149 (RASSVSNSRLNSRTNSSVSL) are enriched in low complexity. A compositionally biased stretch (polar residues) spans 154-175 (GSSSWKNKIKNAVSNVTDQSKR).

The protein resides in the cytoplasm. Its subcellular location is the nucleus. This is an uncharacterized protein from Schizosaccharomyces pombe (strain 972 / ATCC 24843) (Fission yeast).